We begin with the raw amino-acid sequence, 138 residues long: Nucleoside diphosphate kinase (138 aa).

The ATP site is built by lysine 9, phenylalanine 57, arginine 85, threonine 91, arginine 102, and asparagine 112. The Pros-phosphohistidine intermediate role is filled by histidine 115.

This sequence belongs to the NDK family. As to quaternary structure, homotetramer. Mg(2+) is required as a cofactor.

The protein resides in the cytoplasm. It carries out the reaction a 2'-deoxyribonucleoside 5'-diphosphate + ATP = a 2'-deoxyribonucleoside 5'-triphosphate + ADP. The catalysed reaction is a ribonucleoside 5'-diphosphate + ATP = a ribonucleoside 5'-triphosphate + ADP. Major role in the synthesis of nucleoside triphosphates other than ATP. The ATP gamma phosphate is transferred to the NDP beta phosphate via a ping-pong mechanism, using a phosphorylated active-site intermediate. The polypeptide is Nucleoside diphosphate kinase (Deinococcus radiodurans (strain ATCC 13939 / DSM 20539 / JCM 16871 / CCUG 27074 / LMG 4051 / NBRC 15346 / NCIMB 9279 / VKM B-1422 / R1)).